Here is a 318-residue protein sequence, read N- to C-terminus: Thymidylate synthase (318 aa).

DUMP contacts are provided by residues R25 and 180 to 181 (RR). The Nucleophile role is filled by C200. Residues 220–223 (RSGD), N231, and 261–263 (HIY) contribute to the dUMP site. D223 contributes to the (6R)-5,10-methylene-5,6,7,8-tetrahydrofolate binding site. A317 is a (6R)-5,10-methylene-5,6,7,8-tetrahydrofolate binding site.

This sequence belongs to the thymidylate synthase family. Bacterial-type ThyA subfamily. In terms of assembly, homodimer.

The protein resides in the cytoplasm. It carries out the reaction dUMP + (6R)-5,10-methylene-5,6,7,8-tetrahydrofolate = 7,8-dihydrofolate + dTMP. It functions in the pathway pyrimidine metabolism; dTTP biosynthesis. In terms of biological role, catalyzes the reductive methylation of 2'-deoxyuridine-5'-monophosphate (dUMP) to 2'-deoxythymidine-5'-monophosphate (dTMP) while utilizing 5,10-methylenetetrahydrofolate (mTHF) as the methyl donor and reductant in the reaction, yielding dihydrofolate (DHF) as a by-product. This enzymatic reaction provides an intracellular de novo source of dTMP, an essential precursor for DNA biosynthesis. The sequence is that of Thymidylate synthase from Bacillus cereus (strain ATCC 10987 / NRS 248).